We begin with the raw amino-acid sequence, 234 residues long: Sugar fermentation stimulation protein A (234 aa).

The segment at residues 201 to 220 (LLSEAQNKGVEVLAYKAELS) is a DNA-binding region (H-T-H motif).

It belongs to the SfsA family.

Binds to DNA non-specifically. Could be a regulatory factor involved in maltose metabolism. In Salmonella gallinarum (strain 287/91 / NCTC 13346), this protein is Sugar fermentation stimulation protein A.